A 291-amino-acid polypeptide reads, in one-letter code: UPF0276 protein VV3194 (291 aa).

Belongs to the UPF0276 family.

In Vibrio vulnificus (strain YJ016), this protein is UPF0276 protein VV3194.